The primary structure comprises 170 residues: Myelin-associated oligodendrocyte basic protein (170 aa).

Positions 69-170 are disordered; sequence SRRATSPQRP…GSPTRAPRFW (102 aa). The span at 82–92 shows a compositional bias: low complexity; sequence PAASPVVVRAP. A phosphoserine mark is found at Ser-85, Ser-98, and Ser-107. Tandem repeats lie at residues 93–101 and 105–110. The segment at 93–115 is 3 X 9 AA approximate tandem repeats; it reads PAKPKSPLMPAKPRSPPRPAKPR. A 3; half-length repeat occupies 111–115; sequence PAKPR. Over residues 118-130 the composition is skewed to basic and acidic residues; the sequence is SRTERQPRPRPEV. The segment covering 138–151 has biased composition (low complexity); that stretch reads KPPQKSKQPARSSP.

Its subcellular location is the cytoplasm. The protein resides in the perinuclear region. Functionally, may play a role in compacting or stabilizing the myelin sheath possibly by binding the negatively charged acidic phospholipids of the cytoplasmic membrane. In Mus musculus (Mouse), this protein is Myelin-associated oligodendrocyte basic protein (Mobp).